The following is a 93-amino-acid chain: Pyrimidine/purine nucleoside phosphorylase (93 aa).

The protein belongs to the nucleoside phosphorylase PpnP family.

It carries out the reaction a purine D-ribonucleoside + phosphate = a purine nucleobase + alpha-D-ribose 1-phosphate. The enzyme catalyses adenosine + phosphate = alpha-D-ribose 1-phosphate + adenine. The catalysed reaction is cytidine + phosphate = cytosine + alpha-D-ribose 1-phosphate. It catalyses the reaction guanosine + phosphate = alpha-D-ribose 1-phosphate + guanine. It carries out the reaction inosine + phosphate = alpha-D-ribose 1-phosphate + hypoxanthine. The enzyme catalyses thymidine + phosphate = 2-deoxy-alpha-D-ribose 1-phosphate + thymine. The catalysed reaction is uridine + phosphate = alpha-D-ribose 1-phosphate + uracil. It catalyses the reaction xanthosine + phosphate = alpha-D-ribose 1-phosphate + xanthine. In terms of biological role, catalyzes the phosphorolysis of diverse nucleosides, yielding D-ribose 1-phosphate and the respective free bases. Can use uridine, adenosine, guanosine, cytidine, thymidine, inosine and xanthosine as substrates. Also catalyzes the reverse reactions. The sequence is that of Pyrimidine/purine nucleoside phosphorylase from Aliivibrio fischeri (strain ATCC 700601 / ES114) (Vibrio fischeri).